The following is a 212-amino-acid chain: Ras-related protein Rab-15 (212 aa).

10 residues coordinate GTP: serine 17, glycine 18, valine 19, glycine 20, lysine 21, threonine 22, cysteine 23, serine 35, serine 39, and threonine 40. Threonine 22 serves as a coordination point for Mg(2+). Short sequence motifs (switch) lie at residues 31-45 (NEFH…GVDF) and 63-80 (DTAG…YYRR). The Mg(2+) site is built by threonine 40 and aspartate 63. Positions 66, 121, 122, 124, 151, and 152 each coordinate GTP. 2 S-geranylgeranyl cysteine lipidation sites follow: cysteine 210 and cysteine 212. Cysteine 212 is modified (cysteine methyl ester).

This sequence belongs to the small GTPase superfamily. Rab family. As to quaternary structure, the GTP bound form of RAB15 interacts with REP15. Interacts (GTP-bound form) with MICAL1, MICAL3, MICALCL, EHBP1 and EHBP1L1. Requires Mg(2+) as cofactor. In terms of tissue distribution, expressed predominantly in neural tissues.

It localises to the cell membrane. It carries out the reaction GTP + H2O = GDP + phosphate + H(+). Regulated by guanine nucleotide exchange factors (GEFs) which promote the exchange of bound GDP for free GTP. Regulated by GTPase activating proteins (GAPs) which increase the GTP hydrolysis activity. Inhibited by GDP dissociation inhibitors (GDIs). The small GTPases Rab are key regulators of intracellular membrane trafficking, from the formation of transport vesicles to their fusion with membranes. Rabs cycle between an inactive GDP-bound form and an active GTP-bound form that is able to recruit to membranes different sets of downstream effectors directly responsible for vesicle formation, movement, tethering and fusion. RAB15 may act in concert with RAB3A in regulating aspects of synaptic vesicle membrane flow within the nerve terminal. This Rattus norvegicus (Rat) protein is Ras-related protein Rab-15.